Here is a 131-residue protein sequence, read N- to C-terminus: MSPKIRQTIYLLGTAAPALLGIVLIWGGLDAESAADLGDIIAGVVSILVSGAPAVAAGTVRSQRKDGTLSTSPVDQVTKGVEQVLAARQSAEAEVAKVKQALETAVSGSLPQLGPLATQILNVADDTVWRP.

The next 2 helical transmembrane spans lie at 9–29 (IYLL…WGGL) and 40–60 (IIAG…AGTV). The stretch at 74 to 104 (VDQVTKGVEQVLAARQSAEAEVAKVKQALET) forms a coiled coil.

Belongs to the Mycobacterium phage D29 holin family. As to quaternary structure, homomultimer. Self-associates to form a pore.

The protein resides in the host cell inner membrane. Functionally, accumulates harmlessly in the cytoplasmic membrane until it reaches a critical concentration that triggers the formation of micron-scale pores (holes) causing host cell membrane disruption and endolysin escape into the periplasmic space. Determines the precise timing of host cell lysis. Participates with the endolysin protein in the sequential events which lead to the programmed host cell lysis releasing the mature viral particles from the host cell. The chain is Holin (11) from Mycobacterium (Mycobacteriophage L5).